A 259-amino-acid chain; its full sequence is Type III pantothenate kinase (259 aa).

6-13 (DIGNTNVV) serves as a coordination point for ATP. Residue 107–110 (GADR) coordinates substrate. Aspartate 109 (proton acceptor) is an active-site residue. Position 129 (aspartate 129) interacts with K(+). Threonine 132 is an ATP binding site. Threonine 184 contacts substrate.

Belongs to the type III pantothenate kinase family. Homodimer. NH4(+) is required as a cofactor. K(+) serves as cofactor.

It is found in the cytoplasm. The catalysed reaction is (R)-pantothenate + ATP = (R)-4'-phosphopantothenate + ADP + H(+). Its pathway is cofactor biosynthesis; coenzyme A biosynthesis; CoA from (R)-pantothenate: step 1/5. Functionally, catalyzes the phosphorylation of pantothenate (Pan), the first step in CoA biosynthesis. In Thermomicrobium roseum (strain ATCC 27502 / DSM 5159 / P-2), this protein is Type III pantothenate kinase.